Reading from the N-terminus, the 67-residue chain is Sec-independent protein translocase protein TatA (67 aa).

Residues 1 to 21 (MGSFSLTHWIIVLIIVVLIFG) traverse the membrane as a helical segment. The segment at 43–67 (LNEGTDGKEAQKDDVIEHKKDEDKA) is disordered. The span at 47 to 67 (TDGKEAQKDDVIEHKKDEDKA) shows a compositional bias: basic and acidic residues.

The protein belongs to the TatA/E family. In terms of assembly, the Tat system comprises two distinct complexes: a TatABC complex, containing multiple copies of TatA, TatB and TatC subunits, and a separate TatA complex, containing only TatA subunits. Substrates initially bind to the TatABC complex, which probably triggers association of the separate TatA complex to form the active translocon.

Its subcellular location is the cell inner membrane. Part of the twin-arginine translocation (Tat) system that transports large folded proteins containing a characteristic twin-arginine motif in their signal peptide across membranes. TatA could form the protein-conducting channel of the Tat system. This chain is Sec-independent protein translocase protein TatA, found in Neisseria gonorrhoeae (strain ATCC 700825 / FA 1090).